The following is a 1152-amino-acid chain: DNA-directed RNA polymerase subunit beta (1152 aa).

It belongs to the RNA polymerase beta chain family. As to quaternary structure, the RNAP catalytic core consists of 2 alpha, 1 beta, 1 beta' and 1 omega subunit. When a sigma factor is associated with the core the holoenzyme is formed, which can initiate transcription.

The enzyme catalyses RNA(n) + a ribonucleoside 5'-triphosphate = RNA(n+1) + diphosphate. Functionally, DNA-dependent RNA polymerase catalyzes the transcription of DNA into RNA using the four ribonucleoside triphosphates as substrates. The protein is DNA-directed RNA polymerase subunit beta of Deinococcus geothermalis (strain DSM 11300 / CIP 105573 / AG-3a).